Consider the following 262-residue polypeptide: ATP synthase subunit a (262 aa).

The next 6 membrane-spanning stretches (helical) occupy residues 32–52 (IAFT…AVFV), 98–118 (LFMF…VLGI), 127–147 (FTIT…VGFW), 153–173 (FFSL…IFPI), 189–209 (LFVA…FVID), and 219–239 (LLVG…EILV).

It belongs to the ATPase A chain family. As to quaternary structure, F-type ATPases have 2 components, CF(1) - the catalytic core - and CF(0) - the membrane proton channel. CF(1) has five subunits: alpha(3), beta(3), gamma(1), delta(1), epsilon(1). CF(0) has four main subunits: a, b, b' and c.

It localises to the cell inner membrane. In terms of biological role, key component of the proton channel; it plays a direct role in the translocation of protons across the membrane. This Erythrobacter litoralis (strain HTCC2594) protein is ATP synthase subunit a.